Reading from the N-terminus, the 155-residue chain is FHA domain-containing protein FhaB (155 aa).

The chain crosses the membrane as a helical span at residues 6–28 (LQLTRVGFLLLLWLFIWSVLRIL). Phosphothreonine is present on T36. Residues 83-132 (VLIGRADDSTLVLTDDYASTRHARLSPRGSEWYVEDLGSTNGTYLDRAKV) enclose the FHA domain.

Phosphorylated by PknB. Dephosphorylated by PstP.

Its subcellular location is the cell membrane. The chain is FHA domain-containing protein FhaB (fhaB) from Mycolicibacterium smegmatis (strain ATCC 700084 / mc(2)155) (Mycobacterium smegmatis).